The following is a 438-amino-acid chain: Ribosomal protein uS12 methylthiotransferase RimO (438 aa).

An MTTase N-terminal domain is found at 5–115 (PRVGFVSLGC…VMSAVHTHLP (111 aa)). [4Fe-4S] cluster contacts are provided by Cys14, Cys50, Cys79, Cys146, Cys150, and Cys153. In terms of domain architecture, Radical SAM core spans 132 to 369 (LTPKHYAYLK…MAVQAEISAR (238 aa)). In terms of domain architecture, TRAM spans 372–438 (ERRVGQTLQV…SEHDLWGERR (67 aa)).

Belongs to the methylthiotransferase family. RimO subfamily. The cofactor is [4Fe-4S] cluster.

It localises to the cytoplasm. The catalysed reaction is L-aspartate(89)-[ribosomal protein uS12]-hydrogen + (sulfur carrier)-SH + AH2 + 2 S-adenosyl-L-methionine = 3-methylsulfanyl-L-aspartate(89)-[ribosomal protein uS12]-hydrogen + (sulfur carrier)-H + 5'-deoxyadenosine + L-methionine + A + S-adenosyl-L-homocysteine + 2 H(+). Catalyzes the methylthiolation of an aspartic acid residue of ribosomal protein uS12. In Chromobacterium violaceum (strain ATCC 12472 / DSM 30191 / JCM 1249 / CCUG 213 / NBRC 12614 / NCIMB 9131 / NCTC 9757 / MK), this protein is Ribosomal protein uS12 methylthiotransferase RimO.